The chain runs to 44 residues: Defensin ARD1 (44 aa).

Intrachain disulfides connect C7–C32, C18–C40, and C22–C42.

Its subcellular location is the secreted. Possesses potent anti-fungal activity. The chain is Defensin ARD1 from Archaeoprepona demophon (One-spotted leafwing butterfly).